The chain runs to 447 residues: Phospholipase A(1) LCAT3 (447 aa).

The active-site Acyl-ester intermediate is S177. Active-site charge relay system residues include D384 and H409.

Belongs to the AB hydrolase superfamily. Lipase family.

The protein resides in the microsome membrane. It carries out the reaction a 1,2-diacyl-sn-glycero-3-phosphocholine + H2O = a 2-acyl-sn-glycero-3-phosphocholine + a fatty acid + H(+). In terms of biological role, hydrolyzes the sn-1 acylester bond of phospholipids. Phosphatidylcholine, phosphatidylethanolamine and phosphatidic acid can be used as substrates. Weak activity with lysophosphatidylcholine and no activity with tripalmitoylglycerol and cholesteryl oleate. Seems to have a preference for unsaturated fatty acids at the sn-1 position. The polypeptide is Phospholipase A(1) LCAT3 (LCAT3) (Arabidopsis thaliana (Mouse-ear cress)).